The following is a 189-amino-acid chain: GTP cyclohydrolase 1 (189 aa).

Cysteine 79, histidine 82, and cysteine 151 together coordinate Zn(2+).

The protein belongs to the GTP cyclohydrolase I family. In terms of assembly, toroid-shaped homodecamer, composed of two pentamers of five dimers.

The catalysed reaction is GTP + H2O = 7,8-dihydroneopterin 3'-triphosphate + formate + H(+). It functions in the pathway cofactor biosynthesis; 7,8-dihydroneopterin triphosphate biosynthesis; 7,8-dihydroneopterin triphosphate from GTP: step 1/1. The polypeptide is GTP cyclohydrolase 1 (Lactiplantibacillus plantarum (strain ATCC BAA-793 / NCIMB 8826 / WCFS1) (Lactobacillus plantarum)).